The sequence spans 345 residues: Protein RecA (345 aa).

ATP is bound at residue 66 to 73 (GPESSGKT).

The protein belongs to the RecA family.

The protein localises to the cytoplasm. Functionally, can catalyze the hydrolysis of ATP in the presence of single-stranded DNA, the ATP-dependent uptake of single-stranded DNA by duplex DNA, and the ATP-dependent hybridization of homologous single-stranded DNAs. It interacts with LexA causing its activation and leading to its autocatalytic cleavage. The sequence is that of Protein RecA from Frankia casuarinae (strain DSM 45818 / CECT 9043 / HFP020203 / CcI3).